A 45-amino-acid polypeptide reads, in one-letter code: Myotoxin-2 (45 aa).

Disulfide bonds link C4/C36, C11/C30, and C18/C37.

This sequence belongs to the crotamine-myotoxin family. Monomer. Expressed by the venom gland.

The protein resides in the secreted. Functionally, cationic peptide that possesses multiple functions. It acts as a cell-penetrating peptide (CPP), and as a potent voltage-gated potassium channel (Kv) inhibitor. It exhibits antimicrobial activities, hind limb paralysis, and severe muscle necrosis by a non-enzymatic mechanism. This is Myotoxin-2 from Crotalus viridis viridis (Prairie rattlesnake).